Here is a 262-residue protein sequence, read N- to C-terminus: Type III pantothenate kinase (262 aa).

ATP is bound at residue 6-13 (DVGNTNAV). Substrate is bound by residues Tyr-100 and 107-110 (GADR). Asp-109 (proton acceptor) is an active-site residue. Asp-129 lines the K(+) pocket. Thr-132 is a binding site for ATP. Substrate is bound at residue Thr-184.

This sequence belongs to the type III pantothenate kinase family. Homodimer. The cofactor is NH4(+). K(+) is required as a cofactor.

Its subcellular location is the cytoplasm. It carries out the reaction (R)-pantothenate + ATP = (R)-4'-phosphopantothenate + ADP + H(+). The protein operates within cofactor biosynthesis; coenzyme A biosynthesis; CoA from (R)-pantothenate: step 1/5. Its function is as follows. Catalyzes the phosphorylation of pantothenate (Pan), the first step in CoA biosynthesis. This is Type III pantothenate kinase from Bacillus cereus (strain B4264).